A 309-amino-acid polypeptide reads, in one-letter code: Ribosomal RNA small subunit methyltransferase H (309 aa).

S-adenosyl-L-methionine-binding positions include 33-35, Asp53, Phe79, Asp100, and Gln107; that span reads GGH.

This sequence belongs to the methyltransferase superfamily. RsmH family.

It localises to the cytoplasm. The catalysed reaction is cytidine(1402) in 16S rRNA + S-adenosyl-L-methionine = N(4)-methylcytidine(1402) in 16S rRNA + S-adenosyl-L-homocysteine + H(+). In terms of biological role, specifically methylates the N4 position of cytidine in position 1402 (C1402) of 16S rRNA. The protein is Ribosomal RNA small subunit methyltransferase H of Clostridium botulinum (strain 657 / Type Ba4).